Reading from the N-terminus, the 310-residue chain is Very-long-chain enoyl-CoA reductase (310 aa).

Residues 1 to 85 lie on the Cytoplasmic side of the membrane; the sequence is MPITIKSRSK…KDLGPQISWR (85 aa). Residues 86–106 traverse the membrane as a helical segment; the sequence is LVFFCEYLGPVLVHSLFYYLS. Over 107 to 141 the chain is Lumenal; it reads TIPTVVDRWHSASSDYNPFLNRVAYFLILGHYGKR. A helical transmembrane segment spans residues 142 to 162; the sequence is LFETLFVHQFSLATMPIFNLF. The Cytoplasmic segment spans residues 163–165; it reads KNC. The helical transmembrane segment at 166-186 threads the bilayer; the sequence is FHYWVLSGLISFGYFGYGFPF. The Lumenal segment spans residues 187–201; it reads GNAKLFKYYSYLKLD. Residues 202–222 form a helical membrane-spanning segment; the sequence is DLSTLIGLFVLSELWNFYCHI. Topologically, residues 223-242 are cytoplasmic; that stretch reads KLRLWGDYQKKHGNAKIRVP. Residues 243-265 form a helical membrane-spanning segment; sequence LNQGIFNLFVAPNYTFEVWSWIW. The Lumenal segment spans residues 266 to 268; sequence FTF. A helical membrane pass occupies residues 269 to 291; that stretch reads VFKFNLFAVLFLTVSTAQMYAWA. Topologically, residues 292 to 310 are cytoplasmic; the sequence is QKKNKKYHTRRAFLIPFVF.

It belongs to the steroid 5-alpha reductase family. Interacts with the fatty acid elongation system components ELO2 and ELO3. Interacts with NVJ1.

It is found in the endoplasmic reticulum membrane. The enzyme catalyses a very-long-chain 2,3-saturated fatty acyl-CoA + NADP(+) = a very-long-chain (2E)-enoyl-CoA + NADPH + H(+). The catalysed reaction is octadecanoyl-CoA + NADP(+) = (2E)-octadecenoyl-CoA + NADPH + H(+). It carries out the reaction (2E)-eicosenoyl-CoA + NADPH + H(+) = eicosanoyl-CoA + NADP(+). It catalyses the reaction (2E)-docosenoyl-CoA + NADPH + H(+) = docosanoyl-CoA + NADP(+). The enzyme catalyses (2E)-tetracosenoyl-CoA + NADPH + H(+) = tetracosanoyl-CoA + NADP(+). The catalysed reaction is (2E)-hexacosenoyl-CoA + NADPH + H(+) = hexacosanoyl-CoA + NADP(+). It participates in lipid metabolism; fatty acid biosynthesis. Its function is as follows. Catalyzes the last of the four reactions of the long-chain fatty acids elongation cycle. This endoplasmic reticulum-bound enzymatic process, allows the addition of 2 carbons to the chain of long- and very long-chain fatty acids/VLCFAs per cycle. This enzyme reduces the trans-2,3-enoyl-CoA fatty acid intermediate to an acyl-CoA that can be further elongated by entering a new cycle of elongation. Thereby, it participates in the production of VLCFAs of different chain lengths that are involved in multiple biological processes as precursors of membrane lipids and lipid mediators. VLCFAs serve for instance as precursors for ceramide and sphingolipids. Required for normal biogenesis of piecemeal microautophagy of the nucleus (PMN) bleps and vesicles during nutrient stress. The polypeptide is Very-long-chain enoyl-CoA reductase (TSC13) (Saccharomyces cerevisiae (strain ATCC 204508 / S288c) (Baker's yeast)).